The chain runs to 365 residues: UDP-N-acetylglucosamine--N-acetylmuramyl-(pentapeptide) pyrophosphoryl-undecaprenol N-acetylglucosamine transferase (365 aa).

UDP-N-acetyl-alpha-D-glucosamine-binding positions include 17 to 19 (TGG), asparagine 129, arginine 167, serine 194, isoleucine 250, 269 to 274 (ALTVSE), and glutamine 295.

The protein belongs to the glycosyltransferase 28 family. MurG subfamily.

Its subcellular location is the cell inner membrane. It catalyses the reaction di-trans,octa-cis-undecaprenyl diphospho-N-acetyl-alpha-D-muramoyl-L-alanyl-D-glutamyl-meso-2,6-diaminopimeloyl-D-alanyl-D-alanine + UDP-N-acetyl-alpha-D-glucosamine = di-trans,octa-cis-undecaprenyl diphospho-[N-acetyl-alpha-D-glucosaminyl-(1-&gt;4)]-N-acetyl-alpha-D-muramoyl-L-alanyl-D-glutamyl-meso-2,6-diaminopimeloyl-D-alanyl-D-alanine + UDP + H(+). It functions in the pathway cell wall biogenesis; peptidoglycan biosynthesis. Functionally, cell wall formation. Catalyzes the transfer of a GlcNAc subunit on undecaprenyl-pyrophosphoryl-MurNAc-pentapeptide (lipid intermediate I) to form undecaprenyl-pyrophosphoryl-MurNAc-(pentapeptide)GlcNAc (lipid intermediate II). This Shewanella woodyi (strain ATCC 51908 / MS32) protein is UDP-N-acetylglucosamine--N-acetylmuramyl-(pentapeptide) pyrophosphoryl-undecaprenol N-acetylglucosamine transferase.